The following is a 200-amino-acid chain: Recombination protein RecR (200 aa).

A C4-type zinc finger spans residues 57–72 (CDSCQNFSDTEICQIC). The 96-residue stretch at 80–175 (GTLCVVESPS…LITRLAHGIP (96 aa)) folds into the Toprim domain.

Belongs to the RecR family.

In terms of biological role, may play a role in DNA repair. It seems to be involved in an RecBC-independent recombinational process of DNA repair. It may act with RecF and RecO. In Marinobacter nauticus (strain ATCC 700491 / DSM 11845 / VT8) (Marinobacter aquaeolei), this protein is Recombination protein RecR.